The primary structure comprises 294 residues: Osteopontin (294 aa).

Residues 1–16 (MRLAVICFCLFGIASS) form the signal peptide. Phosphoserine occurs at positions 24, 26, 27, 61, 62, 75, 77, 80, 106, 109, 112, 115, and 118. Positions 42–274 (WLVPDPSQKQ…LVLDPKSKED (233 aa)) are disordered. A compositionally biased stretch (polar residues) spans 48-61 (SQKQNLLAPQNAVS). The segment covering 85-110 (DDDDDDDDDDGDHAESEDSVDSDESD) has biased composition (acidic residues). Residues 121–130 (TVTASTQADT) show a composition bias toward polar residues. T123, T132, and T137 each carry an O-linked (GalNAc...) threonine glycan. The Cell attachment site motif lies at 144–146 (RGD). Phosphothreonine occurs at positions 170 and 175. Over residues 174 to 187 (LTSHMKSGESKESL) the composition is skewed to basic and acidic residues. 6 positions are modified to phosphoserine: S176, S180, S200, S209, S213, and S219. Over residues 197–216 (SMPSDQDNNGKGSHESSQLD) the composition is skewed to polar residues. S219 is a glycosylation site (O-linked (Xyl...) (chondroitin sulfate) serine). Positions 220 to 232 (LETHRLEHSKESQ) are enriched in basic and acidic residues. T222 carries the post-translational modification Phosphothreonine. Phosphoserine occurs at positions 228, 231, 234, 238, 243, 247, 250, 255, 260, 271, 283, 288, 290, and 291. Polar residues predominate over residues 234-249 (SADQSDVIDSQASSKA). Positions 263 to 274 (DKLVLDPKSKED) are enriched in basic and acidic residues. S288 carries an O-linked (Xyl...) (chondroitin sulfate) serine glycan.

This sequence belongs to the osteopontin family. Interacts (via N-terminus) with integrin ITGA9:ITGB1. Extensively phosphorylated by FAM20C in the extracellular medium at multiple sites within the S-x-E/pS motif. The phosphorylated form inhibits hydroxyapatite crystallization. Dephosphorylation via a mechanism involving ALPL/TNAP promotes hydroxyapatite crystallization. In terms of processing, O-glycosylated. Post-translationally, forms covalent cross-links mediated by transglutaminase TGM2, between a glutamine and the epsilon-amino group of a lysine residue, forming homopolymers and heteropolymers, increasing its collagen binding properties.

It localises to the secreted. Functionally, major non-collagenous bone protein that binds tightly to hydroxyapatite. Appears to form an integral part of the mineralized matrix. Probably important to cell-matrix interaction. In terms of biological role, acts as a cytokine involved in enhancing production of interferon-gamma and interleukin-12 and reducing production of interleukin-10 and is essential in the pathway that leads to type I immunity. The protein is Osteopontin (Spp1) of Mus musculus (Mouse).